We begin with the raw amino-acid sequence, 255 residues long: Putative transcription factor D5 (255 aa).

In terms of biological role, putative transcription factor required for the expression of viral late genes. The chain is Putative transcription factor D5 from Escherichia coli (Enterobacteria phage T5).